The sequence spans 175 residues: NADH-ubiquinone oxidoreductase chain 6 (175 aa).

6 helical membrane passes run 1–21, 25–45, 47–67, 88–108, 115–137, and 149–169; these read MMTY…IGSP, SPIY…GMVL, FGGS…MLVV, VVLG…LYVL, LVFK…GVFS, and YGVW…VVIM.

The protein belongs to the complex I subunit 6 family. Core subunit of respiratory chain NADH dehydrogenase (Complex I) which is composed of 45 different subunits.

The protein resides in the mitochondrion inner membrane. The catalysed reaction is a ubiquinone + NADH + 5 H(+)(in) = a ubiquinol + NAD(+) + 4 H(+)(out). Its function is as follows. Core subunit of the mitochondrial membrane respiratory chain NADH dehydrogenase (Complex I) which catalyzes electron transfer from NADH through the respiratory chain, using ubiquinone as an electron acceptor. Essential for the catalytic activity and assembly of complex I. This Hippopotamus amphibius (Hippopotamus) protein is NADH-ubiquinone oxidoreductase chain 6 (MT-ND6).